Reading from the N-terminus, the 253-residue chain is DNA repair protein RecO (253 aa).

Belongs to the RecO family.

In terms of biological role, involved in DNA repair and RecF pathway recombination. This Streptococcus agalactiae serotype Ia (strain ATCC 27591 / A909 / CDC SS700) protein is DNA repair protein RecO.